We begin with the raw amino-acid sequence, 395 residues long: ATP-dependent RNA helicase eIF4A (395 aa).

The residue at position 2 (Ser-2) is an N-acetylserine. The Q motif signature appears at Tyr-22–Gln-50. The Helicase ATP-binding domain occupies Ile-53–Ile-222. Ala-66–Thr-73 contributes to the ATP binding site. A Phosphothreonine modification is found at Thr-73. Phosphoserine occurs at positions 77 and 129. Thr-146 is subject to Phosphothreonine. Residues Asp-170–Asp-173 carry the DEAD box motif. Residues Gly-233 to Leu-394 enclose the Helicase C-terminal domain.

The protein belongs to the DEAD box helicase family. eIF4A subfamily. In terms of assembly, component of the eIF4F complex, which composition varies with external and internal environmental conditions. It is composed of at least eIF4A, eIF4E and eIF4G.

It localises to the cytoplasm. It catalyses the reaction ATP + H2O = ADP + phosphate + H(+). In terms of biological role, ATP-dependent RNA helicase which is a subunit of the eIF4F complex involved in cap recognition and is required for mRNA binding to ribosome. In the current model of translation initiation, eIF4A unwinds RNA secondary structures in the 5'-UTR of mRNAs which is necessary to allow efficient binding of the small ribosomal subunit, and subsequent scanning for the initiator codon. The sequence is that of ATP-dependent RNA helicase eIF4A (TIF1) from Saccharomyces cerevisiae (strain YJM789) (Baker's yeast).